The sequence spans 363 residues: Dual-specificity RNA methyltransferase RlmN (363 aa).

The Proton acceptor role is filled by Glu-102. In terms of domain architecture, Radical SAM core spans 108–344; the sequence is EKKRSTLCVS…TTTIRKNRGE (237 aa). A disulfide bridge connects residues Cys-115 and Cys-350. [4Fe-4S] cluster-binding residues include Cys-122, Cys-126, and Cys-129. S-adenosyl-L-methionine is bound by residues 174–175, Ser-206, 228–230, and Asn-307; these read GE and SLH. The S-methylcysteine intermediate role is filled by Cys-350.

This sequence belongs to the radical SAM superfamily. RlmN family. The cofactor is [4Fe-4S] cluster.

Its subcellular location is the cytoplasm. The catalysed reaction is adenosine(2503) in 23S rRNA + 2 reduced [2Fe-2S]-[ferredoxin] + 2 S-adenosyl-L-methionine = 2-methyladenosine(2503) in 23S rRNA + 5'-deoxyadenosine + L-methionine + 2 oxidized [2Fe-2S]-[ferredoxin] + S-adenosyl-L-homocysteine. It catalyses the reaction adenosine(37) in tRNA + 2 reduced [2Fe-2S]-[ferredoxin] + 2 S-adenosyl-L-methionine = 2-methyladenosine(37) in tRNA + 5'-deoxyadenosine + L-methionine + 2 oxidized [2Fe-2S]-[ferredoxin] + S-adenosyl-L-homocysteine. Specifically methylates position 2 of adenine 2503 in 23S rRNA and position 2 of adenine 37 in tRNAs. m2A2503 modification seems to play a crucial role in the proofreading step occurring at the peptidyl transferase center and thus would serve to optimize ribosomal fidelity. The protein is Dual-specificity RNA methyltransferase RlmN of Buchnera aphidicola subsp. Acyrthosiphon pisum (strain APS) (Acyrthosiphon pisum symbiotic bacterium).